A 233-amino-acid chain; its full sequence is Sugar fermentation stimulation protein homolog (233 aa).

Belongs to the SfsA family.

This is Sugar fermentation stimulation protein homolog from Pyrobaculum neutrophilum (strain DSM 2338 / JCM 9278 / NBRC 100436 / V24Sta) (Thermoproteus neutrophilus).